The following is a 175-amino-acid chain: Regenerating islet-derived protein 3-alpha (175 aa).

Residues 1 to 26 form the signal peptide; sequence MLPPMALPSVSWMLLSCLMLLSQVQG. The propeptide occupies 27–37; that stretch reads EEPQRELPSAR. Disulfide bonds link C40-C51, C68-C171, and C146-C163. A C-type lectin domain is found at 47-172; sequence YGSHCYALFL…CNVRLPYVCK (126 aa). Zn(2+) contacts are provided by H50 and H107. The segment at 103–118 is sufficient to activate EXTL3; sequence WIGLHDPTQGTEPNGE. The short motif at 114–116 is the EPN element; sequence EPN. Positions 121 and 145 each coordinate Zn(2+).

In terms of assembly, forms a hexameric membrane-permeabilizing oligomeric pore on membrane phospholipids. The hexamer is formed by three dimers related by helical symmetry. Forms filaments, filamentation traps pore complexes and limits damage to host cells. Interacts with EXTL3. In terms of processing, proteolytic processing by trypsin removes an inhibitory N-terminal propeptide and is essential for peptidoglycan binding and antibacterial activity. In terms of tissue distribution, expressed by keratinocytes. Highly expressed in epidermal keratinocytes of psoriasis patients (at protein level). Constitutively expressed in intestine. Low expression is found in healthy pancreas. Overexpressed during the acute phase of pancreatitis and in some patients with chronic pancreatitis.

It localises to the secreted. With respect to regulation, lipopolysaccharide inhibits pore-forming activity, explaining why is bactericidal for Gram-positive but not Gram-negative bacteria. In terms of biological role, bactericidal C-type lectin which acts exclusively against Gram-positive bacteria and mediates bacterial killing by binding to surface-exposed carbohydrate moieties of peptidoglycan. Binds membrane phospholipids and kills bacteria by forming a hexameric membrane-permeabilizing oligomeric pore. Functionally, acts as a hormone in response to different stimuli like anti-inflammatory signals, such as IL17A, or gut microbiome. Secreted by different cell types to activate its receptor EXTL3 and induce cell specific signaling pathways. Induced by IL17A in keratinocytes, regulates keratinocyte proliferation and differentiation after skin injury via activation of EXTL3-PI3K-AKT signaling pathway. In parallel, inhibits skin inflammation through the inhibition of inflammatory cytokines such as IL6 and TNF. In pancreas, is able to permealize beta-cells membrane and stimulate their proliferation. Has bacteriostatic activity. The chain is Regenerating islet-derived protein 3-alpha from Homo sapiens (Human).